Reading from the N-terminus, the 199-residue chain is Ribonuclease HII (199 aa).

Residues 9 to 198 enclose the RNase H type-2 domain; the sequence is QFVAGVDEVG…VRAAIEQMNL (190 aa). D15, E16, and D107 together coordinate a divalent metal cation.

It belongs to the RNase HII family. It depends on Mn(2+) as a cofactor. Requires Mg(2+) as cofactor.

Its subcellular location is the cytoplasm. The catalysed reaction is Endonucleolytic cleavage to 5'-phosphomonoester.. In terms of biological role, endonuclease that specifically degrades the RNA of RNA-DNA hybrids. This chain is Ribonuclease HII, found in Saccharophagus degradans (strain 2-40 / ATCC 43961 / DSM 17024).